Here is a 202-residue protein sequence, read N- to C-terminus: CASP-like protein 2B1 (202 aa).

The Cytoplasmic portion of the chain corresponds to 1–29; it reads MSYLGVGVSPGNVPVYHGTNSKVIDRRVR. A helical transmembrane segment spans residues 30 to 50; sequence LAELVLRCVICCLGVLAAVLV. Residues 51–72 are Extracellular-facing; it reads GTDTQVKEIFSIQKKARFTDMK. Residues 73–93 traverse the membrane as a helical segment; sequence ALVFLVAANGIAAAYSFVQGV. The Cytoplasmic portion of the chain corresponds to 94–109; the sequence is RCVVGMVKGSVLFSKP. Residues 110–132 form a helical membrane-spanning segment; the sequence is LAWVIFSGDQMMAYLTMSAVAAA. The Extracellular segment spans residues 133–164; the sequence is AQSSVFAKLGQPDLQWMKICTMYGKFCNQVGE. Residues 165 to 185 traverse the membrane as a helical segment; the sequence is GIASALLVSVSMVVLSCISAF. Topologically, residues 186–202 are cytoplasmic; that stretch reads SLFRLYGGNKGKDGARW.

It belongs to the Casparian strip membrane proteins (CASP) family. In terms of assembly, homodimer and heterodimers.

It localises to the cell membrane. The polypeptide is CASP-like protein 2B1 (Populus trichocarpa (Western balsam poplar)).